A 295-amino-acid polypeptide reads, in one-letter code: Pyridoxal 5'-phosphate synthase subunit PdxS (295 aa).

Aspartate 23 lines the D-ribose 5-phosphate pocket. Lysine 80 serves as the catalytic Schiff-base intermediate with D-ribose 5-phosphate. Glycine 152 contributes to the D-ribose 5-phosphate binding site. Arginine 164 contacts D-glyceraldehyde 3-phosphate. Residues glycine 213 and 234-235 (GS) contribute to the D-ribose 5-phosphate site.

The protein belongs to the PdxS/SNZ family. In the presence of PdxT, forms a dodecamer of heterodimers.

The catalysed reaction is aldehydo-D-ribose 5-phosphate + D-glyceraldehyde 3-phosphate + L-glutamine = pyridoxal 5'-phosphate + L-glutamate + phosphate + 3 H2O + H(+). It participates in cofactor biosynthesis; pyridoxal 5'-phosphate biosynthesis. Functionally, catalyzes the formation of pyridoxal 5'-phosphate from ribose 5-phosphate (RBP), glyceraldehyde 3-phosphate (G3P) and ammonia. The ammonia is provided by the PdxT subunit. Can also use ribulose 5-phosphate and dihydroxyacetone phosphate as substrates, resulting from enzyme-catalyzed isomerization of RBP and G3P, respectively. This Methanopyrus kandleri (strain AV19 / DSM 6324 / JCM 9639 / NBRC 100938) protein is Pyridoxal 5'-phosphate synthase subunit PdxS.